We begin with the raw amino-acid sequence, 140 residues long: UPF0102 protein alr1796 (140 aa).

Belongs to the UPF0102 family.

This is UPF0102 protein alr1796 from Nostoc sp. (strain PCC 7120 / SAG 25.82 / UTEX 2576).